A 354-amino-acid polypeptide reads, in one-letter code: MCTRNKKDITTEYLNSKKIDRELKQESTTLQPLKLLLLGSGECGKSTIFKQIISFQDEATKKEYTPPSDYVIKNIFLNILTATSTFVRVAPSYNIEFSEEENQKIQSILNVFSDLENLDQTVFTSVSDNIKYLWNSKQIQSIYNNTNRIFQLNDSTEYLMSNIDRYSKPFKPTQNDFLRVRVKTTGIVEADFKIEAVPFKLVDVGGQKNQRRKWIHCFQDITCVLFVTSINDYDTLLEEDNSTSRFTDSLELFREMVNSNWFTKSPFVLFFNKIDLFKEKIKRIPVSQHLKDFNGNDHSYEETSQFIKNKFHTTIKNSNKIVYHHFTCALDSRAIEVVFNSIQHSLLMNVAEIL.

One can recognise a G-alpha domain in the interval 31–354 (QPLKLLLLGS…SLLMNVAEIL (324 aa)). Residues 34-47 (KLLLLGSGECGKST) are G1 motif. Residues 39–46 (GSGECGKS), 178–184 (LRVRVKT), 203–207 (DVGGQ), 272–275 (NKID), and A329 contribute to the GTP site. Positions 46 and 184 each coordinate Mg(2+). Residues 176–184 (DFLRVRVKT) are G2 motif. The tract at residues 199 to 208 (FKLVDVGGQK) is G3 motif. Positions 268-275 (VLFFNKID) are G4 motif. The segment at 327–332 (TCALDS) is G5 motif.

Belongs to the G-alpha family. As to quaternary structure, g proteins are composed of 3 units; alpha, beta and gamma. The alpha chain contains the guanine nucleotide binding site.

In terms of biological role, guanine nucleotide-binding proteins (G proteins) are involved as modulators or transducers in various transmembrane signaling systems. The sequence is that of Guanine nucleotide-binding protein alpha-12 subunit (gpaL) from Dictyostelium discoideum (Social amoeba).